The sequence spans 295 residues: 4-hydroxy-tetrahydrodipicolinate synthase (295 aa).

Threonine 47 serves as a coordination point for pyruvate. Residue tyrosine 135 is the Proton donor/acceptor of the active site. The active-site Schiff-base intermediate with substrate is the lysine 163. Isoleucine 204 provides a ligand contact to pyruvate.

Belongs to the DapA family. In terms of assembly, homotetramer; dimer of dimers.

The protein resides in the cytoplasm. It carries out the reaction L-aspartate 4-semialdehyde + pyruvate = (2S,4S)-4-hydroxy-2,3,4,5-tetrahydrodipicolinate + H2O + H(+). The protein operates within amino-acid biosynthesis; L-lysine biosynthesis via DAP pathway; (S)-tetrahydrodipicolinate from L-aspartate: step 3/4. In terms of biological role, catalyzes the condensation of (S)-aspartate-beta-semialdehyde [(S)-ASA] and pyruvate to 4-hydroxy-tetrahydrodipicolinate (HTPA). In Caldicellulosiruptor bescii (strain ATCC BAA-1888 / DSM 6725 / KCTC 15123 / Z-1320) (Anaerocellum thermophilum), this protein is 4-hydroxy-tetrahydrodipicolinate synthase.